The following is a 159-amino-acid chain: HSP70 co-chaperone SNL1 (159 aa).

Residues 1-12 are Perinuclear space-facing; that stretch reads MSHNAMEHWKSK. Residues 13–35 traverse the membrane as a helical; Signal-anchor for type II membrane protein segment; sequence LSKTSTSTYVLLAVIAVVFLVTI. Topologically, residues 36–159 are cytoplasmic; it reads RRPNGSKGKS…AMLKSLDSLK (124 aa). Residues 39 to 64 form a disordered region; sequence NGSKGKSSKKRASKKNKKGKNQFEKA. The span at 44 to 58 shows a compositional bias: basic residues; sequence KSSKKRASKKNKKGK. The region spanning 73–159 is the BAG domain; that stretch reads QIDNVSLRYG…AMLKSLDSLK (87 aa).

Interacts with the HSP70 family members SSA1, SSA4, and SSB1. These interactions are strongly reduced by ADP and ATP.

The protein localises to the endoplasmic reticulum membrane. The protein resides in the nucleus membrane. Functionally, stimulator of ATPase activity of molecular chaperones of the HSP70 family (principally of the SSA class). Stimulation is important for HSP70-substrate complex dissociation after folding of newly synthesized or refolded proteins. SNL1 is probably involved in nuclear pore biogenesis and in particular the folding or refolding of misfolded NUP116, GLE2 and NIC96. In Saccharomyces cerevisiae (strain ATCC 204508 / S288c) (Baker's yeast), this protein is HSP70 co-chaperone SNL1 (SNL1).